The primary structure comprises 244 residues: 7-cyano-7-deazaguanine synthase (244 aa).

Position 17-27 (17-27 (FSGGQDSTTCL)) interacts with ATP. Residues Cys205, Cys220, Cys223, and Cys226 each coordinate Zn(2+).

The protein belongs to the QueC family. It depends on Zn(2+) as a cofactor.

It catalyses the reaction 7-carboxy-7-deazaguanine + NH4(+) + ATP = 7-cyano-7-deazaguanine + ADP + phosphate + H2O + H(+). It functions in the pathway purine metabolism; 7-cyano-7-deazaguanine biosynthesis. Its function is as follows. Catalyzes the ATP-dependent conversion of 7-carboxy-7-deazaguanine (CDG) to 7-cyano-7-deazaguanine (preQ(0)). The polypeptide is 7-cyano-7-deazaguanine synthase (Bordetella pertussis (strain Tohama I / ATCC BAA-589 / NCTC 13251)).